Consider the following 384-residue polypeptide: Bifunctional enzyme IspD/IspF (384 aa).

Residues 1 to 226 (MAKTVVLVVA…RCLFDGPGEV (226 aa)) form a 2-C-methyl-D-erythritol 4-phosphate cytidylyltransferase region. Residues 227 to 384 (RSASGYDVHR…QAMASVWLPR (158 aa)) form a 2-C-methyl-D-erythritol 2,4-cyclodiphosphate synthase region. 2 residues coordinate a divalent metal cation: D233 and H235. 4-CDP-2-C-methyl-D-erythritol 2-phosphate is bound by residues 233–235 (DVH) and 260–261 (HS). H268 contributes to the a divalent metal cation binding site. 4-CDP-2-C-methyl-D-erythritol 2-phosphate is bound by residues 282-284 (DIG), 358-361 (TTTE), F365, and R368.

This sequence in the N-terminal section; belongs to the IspD/TarI cytidylyltransferase family. IspD subfamily. The protein in the C-terminal section; belongs to the IspF family. It depends on a divalent metal cation as a cofactor.

The catalysed reaction is 2-C-methyl-D-erythritol 4-phosphate + CTP + H(+) = 4-CDP-2-C-methyl-D-erythritol + diphosphate. It catalyses the reaction 4-CDP-2-C-methyl-D-erythritol 2-phosphate = 2-C-methyl-D-erythritol 2,4-cyclic diphosphate + CMP. Its pathway is isoprenoid biosynthesis; isopentenyl diphosphate biosynthesis via DXP pathway; isopentenyl diphosphate from 1-deoxy-D-xylulose 5-phosphate: step 2/6. It functions in the pathway isoprenoid biosynthesis; isopentenyl diphosphate biosynthesis via DXP pathway; isopentenyl diphosphate from 1-deoxy-D-xylulose 5-phosphate: step 4/6. Functionally, bifunctional enzyme that catalyzes the formation of 4-diphosphocytidyl-2-C-methyl-D-erythritol from CTP and 2-C-methyl-D-erythritol 4-phosphate (MEP) (IspD), and catalyzes the conversion of 4-diphosphocytidyl-2-C-methyl-D-erythritol 2-phosphate (CDP-ME2P) to 2-C-methyl-D-erythritol 2,4-cyclodiphosphate (ME-CPP) with a corresponding release of cytidine 5-monophosphate (CMP) (IspF). The sequence is that of Bifunctional enzyme IspD/IspF from Paramagnetospirillum magneticum (strain ATCC 700264 / AMB-1) (Magnetospirillum magneticum).